Reading from the N-terminus, the 784-residue chain is Protein translocase subunit SecA 2 (784 aa).

ATP is bound by residues Gln-94, 112-116 (GEGKT), and Asp-501.

This sequence belongs to the SecA family. Monomer and homodimer. Part of the essential Sec protein translocation apparatus which comprises SecA, SecYEG and auxiliary proteins SecDF. Other proteins may also be involved.

The protein localises to the cell membrane. Its subcellular location is the cytoplasm. It catalyses the reaction ATP + H2O + cellular proteinSide 1 = ADP + phosphate + cellular proteinSide 2.. Part of the Sec protein translocase complex. Interacts with the SecYEG preprotein conducting channel. Has a central role in coupling the hydrolysis of ATP to the transfer of proteins into and across the cell membrane, serving as an ATP-driven molecular motor driving the stepwise translocation of polypeptide chains across the membrane. The chain is Protein translocase subunit SecA 2 from Mycolicibacterium smegmatis (strain ATCC 700084 / mc(2)155) (Mycobacterium smegmatis).